The following is a 640-amino-acid chain: MEPPFFLLLLLLVVSSSSPSAALLSAKGVNNEVQALIVIKNLLKDPHGVLKSWDQNSVDPCSWAMITCSPDFLVTGLEAPSQHLSGLLSPSIGNLTNLETVLLQNNNITGPIPAEIGRLENLKTLDLSSNSFYGEIPSSVGHLESLQYLRLNNNTLSGPFPSASANLSHLVFLDLSYNNLSGPIPESLARTYNIVGNPLICDANREQDCYGTAPMPMSYSLNGSRGGALPPAARDRGHKFAVAFGSTAGCMGLLLLAAGFLFWWRHRRNRQILFDVDEQQIENVNLGNVKRFSFRELQAATEGFSGKNILGKGGFGNVYRGQLPDGTLVAVKRLKDGNAAGGEAQFQTEVEMISLALHRNLLRLYGFCMTATERLLVYPFMSNGSVASRLKAKPALEWGTRRRIAVGAARGLVYLHEQCDPKIIHRDVKAANVLLDEACEAVVGDFGLAKLLDHRESHVTTAVRGTVGHIAPEYLSTGQSSDRTDVFGFGILLLELVTGQTALEFGKSSNHKGAMLDWVKKMQSEKKVEVLVDKGLGGGYDRVEVEEMVQVALLCTQYLPAHRPRMSDVVRMLEGDGLADRWEKASGHSTAAADSLSHSHRTSDPAPPAADFAAAFGRCFSDLTDDSSLLVQAVELSGPR.

The N-terminal stretch at 1–22 is a signal peptide; the sequence is MEPPFFLLLLLLVVSSSSPSAA. At 23-241 the chain is on the extracellular side; it reads LLSAKGVNNE…AARDRGHKFA (219 aa). Asn94 and Asn107 each carry an N-linked (GlcNAc...) asparagine glycan. 4 LRR repeats span residues 95–119, 120–143, 145–167, and 168–191; these read LTNL…IGRL, ENLK…VGHL, SLQY…SANL, and SHLV…LART. N-linked (GlcNAc...) asparagine glycans are attached at residues Asn153, Asn166, Asn179, and Asn222. Residues 242 to 262 form a helical membrane-spanning segment; that stretch reads VAFGSTAGCMGLLLLAAGFLF. Topologically, residues 263–640 are cytoplasmic; that stretch reads WWRHRRNRQI…VQAVELSGPR (378 aa). A Protein kinase domain is found at 304 to 583; the sequence is FSGKNILGKG…EGDGLADRWE (280 aa). ATP is bound by residues 310–318 and Lys332; that span reads LGKGGFGNV. Catalysis depends on Asp427, which acts as the Proton acceptor.

The protein belongs to the protein kinase superfamily. Ser/Thr protein kinase family. Interacts with MSBP1.

The protein resides in the cell membrane. It catalyses the reaction L-seryl-[protein] + ATP = O-phospho-L-seryl-[protein] + ADP + H(+). The enzyme catalyses L-threonyl-[protein] + ATP = O-phospho-L-threonyl-[protein] + ADP + H(+). Functionally, LRR receptor kinase that may be involved in defense response. In Oryza sativa subsp. japonica (Rice), this protein is LRR receptor kinase SERL2.